Reading from the N-terminus, the 199-residue chain is uncharacterized protein (199 aa).

This is an uncharacterized protein from Treponema pallidum (strain Nichols).